Consider the following 227-residue polypeptide: Cytochrome c oxidase subunit 2 (227 aa).

The Mitochondrial intermembrane portion of the chain corresponds to 1 to 14 (MAYPFQLGLQDATS). Residues 15–45 (PIMEELLHFHDHALMIVFLISSLVLYIISLM) form a helical membrane-spanning segment. Residues 46-59 (LTTKLTHTSTMDAQ) are Mitochondrial matrix-facing. Residues 60 to 87 (EVETVWTILPAIILILIALPSLRILYMM) traverse the membrane as a helical segment. Residues 88 to 227 (DEINNPSLTV…YFETWSALMV (140 aa)) are Mitochondrial intermembrane-facing. Residues His161, Cys196, Glu198, Cys200, His204, and Met207 each coordinate Cu cation. Position 198 (Glu198) interacts with Mg(2+). The residue at position 218 (Tyr218) is a Phosphotyrosine.

It belongs to the cytochrome c oxidase subunit 2 family. In terms of assembly, component of the cytochrome c oxidase (complex IV, CIV), a multisubunit enzyme composed of 14 subunits. The complex is composed of a catalytic core of 3 subunits MT-CO1, MT-CO2 and MT-CO3, encoded in the mitochondrial DNA, and 11 supernumerary subunits COX4I, COX5A, COX5B, COX6A, COX6B, COX6C, COX7A, COX7B, COX7C, COX8 and NDUFA4, which are encoded in the nuclear genome. The complex exists as a monomer or a dimer and forms supercomplexes (SCs) in the inner mitochondrial membrane with NADH-ubiquinone oxidoreductase (complex I, CI) and ubiquinol-cytochrome c oxidoreductase (cytochrome b-c1 complex, complex III, CIII), resulting in different assemblies (supercomplex SCI(1)III(2)IV(1) and megacomplex MCI(2)III(2)IV(2)). Found in a complex with TMEM177, COA6, COX18, COX20, SCO1 and SCO2. Interacts with TMEM177 in a COX20-dependent manner. Interacts with COX20. Interacts with COX16. It depends on Cu cation as a cofactor.

It localises to the mitochondrion inner membrane. The enzyme catalyses 4 Fe(II)-[cytochrome c] + O2 + 8 H(+)(in) = 4 Fe(III)-[cytochrome c] + 2 H2O + 4 H(+)(out). In terms of biological role, component of the cytochrome c oxidase, the last enzyme in the mitochondrial electron transport chain which drives oxidative phosphorylation. The respiratory chain contains 3 multisubunit complexes succinate dehydrogenase (complex II, CII), ubiquinol-cytochrome c oxidoreductase (cytochrome b-c1 complex, complex III, CIII) and cytochrome c oxidase (complex IV, CIV), that cooperate to transfer electrons derived from NADH and succinate to molecular oxygen, creating an electrochemical gradient over the inner membrane that drives transmembrane transport and the ATP synthase. Cytochrome c oxidase is the component of the respiratory chain that catalyzes the reduction of oxygen to water. Electrons originating from reduced cytochrome c in the intermembrane space (IMS) are transferred via the dinuclear copper A center (CU(A)) of subunit 2 and heme A of subunit 1 to the active site in subunit 1, a binuclear center (BNC) formed by heme A3 and copper B (CU(B)). The BNC reduces molecular oxygen to 2 water molecules using 4 electrons from cytochrome c in the IMS and 4 protons from the mitochondrial matrix. The protein is Cytochrome c oxidase subunit 2 (MT-CO2) of Canis aureus (Golden jackal).